A 444-amino-acid chain; its full sequence is MTESLWHERRLTEEKKRRNDHRSPYQRDRARILHSAAFRRLQAKTQVLGVGMNDFYRTRLTHSLEVSQIGTGIRAQLKQKRPEFDHLFDSMSLIESLCLAHDIGHPPFGHGGEVALNYMMRDHGGFEGNGQTFRILTGLEPYTEYYGMNLCRRTLLGILKYPAPYSSLYRASGNKPVNNIRQLKPSQWTPVKGIFDDDSGILDWVLEPLNGSDRERFLSHRDLGANKHLRTQFKSLDCSVMELADDIAYAVHDLEDAIVMGIVTPSQWQQDVASKLTLSHDAWIKEEFTNIGQNLFSHQHHLRKDAIGTLVNGFVTAIDIVEDRAFTDPLLRFNAGLDTSFSEALEVLKQFVYKYVIRKPEIQMLEYKGQQIVMELFEAFESDPERLLPTHTQERWRESHTKGLNSHRVIADYISGMTDEFAARLHQHLFNPKAGSMIELNGEL.

Residues 1–26 form a disordered region; that stretch reads MTESLWHERRLTEEKKRRNDHRSPYQ. Positions 59–250 constitute an HD domain; that stretch reads RLTHSLEVSQ…MELADDIAYA (192 aa).

Belongs to the dGTPase family. Type 2 subfamily.

This is Deoxyguanosinetriphosphate triphosphohydrolase-like protein from Shewanella sediminis (strain HAW-EB3).